Consider the following 391-residue polypeptide: Aspartic protease 17 (391 aa).

The signal sequence occupies residues 1 to 15 (MHLIFLLFLAPFCSA). The 321-residue stretch at 65 to 385 (YLGNFTVGTP…DIGNARIGFA (321 aa)) folds into the Peptidase A1 domain. Residue Asn68 is glycosylated (N-linked (GlcNAc...) asparagine). The active site involves Asp83. Asn108 is a glycosylation site (N-linked (GlcNAc...) asparagine). The active site involves Asp274. The cysteines at positions 309 and 345 are disulfide-linked.

Belongs to the peptidase A1 family. Expressed in intestinal cells.

Its subcellular location is the secreted. In terms of biological role, aspartic proteinase. The protein is Aspartic protease 17 of Caenorhabditis elegans.